Here is a 368-residue protein sequence, read N- to C-terminus: Cyclic di-GMP phosphodiesterase TM_0186 (368 aa).

Residues 2 to 114 (TVLIVEDDDI…LLRLKITHAL (113 aa)) form the Response regulatory domain. 4-aspartylphosphate is present on D49. The 198-residue stretch at 148–345 (YEDFLFEVLE…ITDVYRREKD (198 aa)) folds into the HD-GYP domain. E169, H173, H205, D206, H234, H260, H261, and D289 together coordinate a divalent metal cation. The segment at 341 to 368 (RREKDEDTSHNGGRSHQSSPGEGVEGIR) is disordered. Over residues 350-360 (HNGGRSHQSSP) the composition is skewed to polar residues.

The enzyme catalyses 3',3'-c-di-GMP + 2 H2O = 2 GMP + 2 H(+). With respect to regulation, can function in vivo with either divalent iron or manganese occupying di- and trimetal sites. Dimetal is necessary and sufficient to catalyze conversion of c-di-GMP to pGpG, but conversion of pGpG to GMP requires an occupied trimetal site. Functionally, phosphodiesterase (PDE) that catalyzes the hydrolysis of cyclic diguanylate (c-di-GMP) to GMP. Hydrolyzes c-di-GMP to GMP in a two-step reaction, via the linear intermediate 5'-phosphoguanylyl(3'-&gt;5')guanosine (pGpG). The polypeptide is Cyclic di-GMP phosphodiesterase TM_0186 (Thermotoga maritima (strain ATCC 43589 / DSM 3109 / JCM 10099 / NBRC 100826 / MSB8)).